The following is a 382-amino-acid chain: Dual-specificity RNA methyltransferase RlmN (382 aa).

The active-site Proton acceptor is E94. Residues 100–336 (EANRGTLCVS…NTITRKTRGD (237 aa)) form the Radical SAM core domain. An intrachain disulfide couples C107 to C342. Residues C114, C118, and C121 each coordinate [4Fe-4S] cluster. S-adenosyl-L-methionine is bound by residues 168 to 169 (GE), S200, 222 to 224 (SLH), and N299. C342 functions as the S-methylcysteine intermediate in the catalytic mechanism.

The protein belongs to the radical SAM superfamily. RlmN family. [4Fe-4S] cluster serves as cofactor.

Its subcellular location is the cytoplasm. The enzyme catalyses adenosine(2503) in 23S rRNA + 2 reduced [2Fe-2S]-[ferredoxin] + 2 S-adenosyl-L-methionine = 2-methyladenosine(2503) in 23S rRNA + 5'-deoxyadenosine + L-methionine + 2 oxidized [2Fe-2S]-[ferredoxin] + S-adenosyl-L-homocysteine. It catalyses the reaction adenosine(37) in tRNA + 2 reduced [2Fe-2S]-[ferredoxin] + 2 S-adenosyl-L-methionine = 2-methyladenosine(37) in tRNA + 5'-deoxyadenosine + L-methionine + 2 oxidized [2Fe-2S]-[ferredoxin] + S-adenosyl-L-homocysteine. Specifically methylates position 2 of adenine 2503 in 23S rRNA and position 2 of adenine 37 in tRNAs. m2A2503 modification seems to play a crucial role in the proofreading step occurring at the peptidyl transferase center and thus would serve to optimize ribosomal fidelity. The sequence is that of Dual-specificity RNA methyltransferase RlmN from Legionella pneumophila (strain Paris).